We begin with the raw amino-acid sequence, 68 residues long: Medusin-AS (68 aa).

An N-terminal signal peptide occupies residues 1–22 (MAFLKKSLFLVLFLGLVSLSVC). A propeptide spanning residues 23–49 (EEEKRESEEEKNEQEEDDRDERSEEKR) is cleaved from the precursor. Residues 24–46 (EEKRESEEEKNEQEEDDRDERSE) are disordered. Acidic residues predominate over residues 31 to 41 (EEKNEQEEDDR). Leucine 67 is subject to Leucine amide.

Belongs to the frog skin active peptide (FSAP) family. Medusin subfamily. Expressed by the skin glands.

The protein resides in the secreted. Functionally, antimicrobial peptide active against Gram-positive bacteria and fungi but inactive against Gram-negative bacteria. Also inhibits growth of B.dendrobatidis zoospores at high concentrations. Shows anticancer activities. Shows hemolytic activity. This is Medusin-AS from Agalychnis spurrelli (Gliding leaf frog).